The following is a 105-amino-acid chain: Small ribosomal subunit protein eS24 (105 aa).

The segment at 85–105 (SVIAKNEEPEEEPEEEAEDAE) is disordered. The segment covering 92–105 (EPEEEPEEEAEDAE) has biased composition (acidic residues).

The protein belongs to the eukaryotic ribosomal protein eS24 family.

In Methanosphaera stadtmanae (strain ATCC 43021 / DSM 3091 / JCM 11832 / MCB-3), this protein is Small ribosomal subunit protein eS24.